Reading from the N-terminus, the 741-residue chain is Phage T7 exclusion protein (741 aa).

Positions 27 to 334 (FGNIAENISR…NSLIFLYPGM (308 aa)) constitute a KAP NTPase domain.

Functionally, responsible for the exclusion of phage T7 by plasmid F. Growth of bacteriophage T7 is inhibited in cells of E.coli that carries the plasmid F. In Escherichia coli (strain K12), this protein is Phage T7 exclusion protein (pifA).